A 427-amino-acid chain; its full sequence is Trigger factor (427 aa).

A PPIase FKBP-type domain is found at 163 to 248; the sequence is GDTVVIDFVG…VNEVKAKELP (86 aa).

The protein belongs to the FKBP-type PPIase family. Tig subfamily.

Its subcellular location is the cytoplasm. It catalyses the reaction [protein]-peptidylproline (omega=180) = [protein]-peptidylproline (omega=0). Its function is as follows. Involved in protein export. Acts as a chaperone by maintaining the newly synthesized protein in an open conformation. Functions as a peptidyl-prolyl cis-trans isomerase. The polypeptide is Trigger factor (Lactococcus lactis subsp. cremoris (strain MG1363)).